A 340-amino-acid chain; its full sequence is Thylakoidal processing peptidase 1, chloroplastic (340 aa).

Residues 1 to 52 constitute a chloroplast transit peptide; the sequence is MAIRITFTYSTHVARNLVGTRVGPGGYCFESLVRPRFFSHKRDFDRSPRNRP. Residues 155-175 form a helical membrane-spanning segment; that stretch reads EDAKAAFTAVTVSILFRSALA. Residues 176 to 340 are Lumenal, thylakoid-facing; sequence EPKSIPSTSM…AITRGPVAVS (165 aa). Serine 184 is a catalytic residue.

The protein belongs to the peptidase S26 family.

It is found in the plastid. The protein localises to the chloroplast thylakoid membrane. It carries out the reaction Cleavage of hydrophobic, N-terminal signal or leader sequences from secreted and periplasmic proteins.. Its function is as follows. Cleaves the thylakoid-transfer domain from a chloroplast protein. This chain is Thylakoidal processing peptidase 1, chloroplastic (TPP1), found in Arabidopsis thaliana (Mouse-ear cress).